A 215-amino-acid chain; its full sequence is Peroxiredoxin 1 (215 aa).

The Thioredoxin domain maps to 1–157; that stretch reads MKLYQKFPET…LLRITKAALV (157 aa). Catalysis depends on Cys-45, which acts as the Cysteine sulfenic acid (-SOH) intermediate. Arg-120 serves as a coordination point for substrate.

Belongs to the peroxiredoxin family. Prx6 subfamily. In terms of assembly, homodecamer. Pentamer of dimers that assemble into a ring structure.

The protein resides in the cytoplasm. It carries out the reaction a hydroperoxide + [thioredoxin]-dithiol = an alcohol + [thioredoxin]-disulfide + H2O. Thiol-specific peroxidase that catalyzes the reduction of hydrogen peroxide and organic hydroperoxides to water and alcohols, respectively. Plays a role in cell protection against oxidative stress by detoxifying peroxides. The protein is Peroxiredoxin 1 of Sulfuracidifex metallicus (Sulfolobus metallicus).